The chain runs to 484 residues: tRNA-2-methylthio-N(6)-dimethylallyladenosine synthase (484 aa).

Residues 36–153 form the MTTase N-terminal domain; the sequence is GKLYIKTHGC…LPELIRARRE (118 aa). [4Fe-4S] cluster-binding residues include Cys-45, Cys-82, Cys-116, Cys-190, Cys-194, and Cys-197. The 240-residue stretch at 176 to 415 folds into the Radical SAM core domain; sequence RAEGPSAFVS…HISAHAASIS (240 aa). One can recognise a TRAM domain in the interval 416–479; sequence QSMVGSVQRV…SNSLRGRIQL (64 aa). The interval 428–450 is disordered; it reads EGPSRRDPNELTGKSENMRPVNF.

Belongs to the methylthiotransferase family. MiaB subfamily. As to quaternary structure, monomer. [4Fe-4S] cluster serves as cofactor.

It is found in the cytoplasm. The catalysed reaction is N(6)-dimethylallyladenosine(37) in tRNA + (sulfur carrier)-SH + AH2 + 2 S-adenosyl-L-methionine = 2-methylsulfanyl-N(6)-dimethylallyladenosine(37) in tRNA + (sulfur carrier)-H + 5'-deoxyadenosine + L-methionine + A + S-adenosyl-L-homocysteine + 2 H(+). Catalyzes the methylthiolation of N6-(dimethylallyl)adenosine (i(6)A), leading to the formation of 2-methylthio-N6-(dimethylallyl)adenosine (ms(2)i(6)A) at position 37 in tRNAs that read codons beginning with uridine. This is tRNA-2-methylthio-N(6)-dimethylallyladenosine synthase from Xanthomonas oryzae pv. oryzae (strain KACC10331 / KXO85).